We begin with the raw amino-acid sequence, 139 residues long: S-adenosylmethionine decarboxylase proenzyme (139 aa).

Catalysis depends on S63, which acts as the Schiff-base intermediate with substrate; via pyruvic acid. At S63 the chain carries Pyruvic acid (Ser); by autocatalysis. H68 (proton acceptor; for processing activity) is an active-site residue. C83 (proton donor; for catalytic activity) is an active-site residue.

This sequence belongs to the prokaryotic AdoMetDC family. Type 1 subfamily. Heterotetramer of two alpha and two beta chains arranged as a dimer of alpha/beta heterodimers. Pyruvate serves as cofactor. Post-translationally, is synthesized initially as an inactive proenzyme. Formation of the active enzyme involves a self-maturation process in which the active site pyruvoyl group is generated from an internal serine residue via an autocatalytic post-translational modification. Two non-identical subunits are generated from the proenzyme in this reaction, and the pyruvate is formed at the N-terminus of the alpha chain, which is derived from the carboxyl end of the proenzyme. The post-translation cleavage follows an unusual pathway, termed non-hydrolytic serinolysis, in which the side chain hydroxyl group of the serine supplies its oxygen atom to form the C-terminus of the beta chain, while the remainder of the serine residue undergoes an oxidative deamination to produce ammonia and the pyruvoyl group blocking the N-terminus of the alpha chain.

It carries out the reaction S-adenosyl-L-methionine + H(+) = S-adenosyl 3-(methylsulfanyl)propylamine + CO2. It participates in amine and polyamine biosynthesis; S-adenosylmethioninamine biosynthesis; S-adenosylmethioninamine from S-adenosyl-L-methionine: step 1/1. Functionally, catalyzes the decarboxylation of S-adenosylmethionine to S-adenosylmethioninamine (dcAdoMet), the propylamine donor required for the synthesis of the polyamines spermine and spermidine from the diamine putrescine. The chain is S-adenosylmethionine decarboxylase proenzyme from Pyrococcus furiosus (strain ATCC 43587 / DSM 3638 / JCM 8422 / Vc1).